The following is a 264-amino-acid chain: uncharacterized protein (264 aa).

The stretch at 19–45 forms a coiled coil; the sequence is AQEESMEQLKDINTKIDNSEKKISLEN.

This is an uncharacterized protein from Acanthamoeba polyphaga mimivirus (APMV).